The sequence spans 967 residues: A disintegrin and metalloproteinase with thrombospondin motifs 1 (967 aa).

Disordered regions lie at residues 1–27 and 192–250; these read MQRA…APGS and GDVG…SIRK. Positions 1–49 are cleaved as a signal peptide; sequence MQRAVPEGFGRRKLGSDMGNAERAPGSRSFGPVPTLLLLAAALLAVSDA. Residues 50–252 constitute a propeptide that is removed on maturation; the sequence is LGRPSEEDEE…TGTGSIRKKR (203 aa). The Cysteine switch motif lies at 196 to 203; it reads GTCGVVDD. Cysteine 198 contributes to the Zn(2+) binding site. The segment covering 203-212 has biased composition (basic and acidic residues); the sequence is DEPRPTGKAE. The segment covering 213 to 226 has biased composition (acidic residues); it reads TEDEDEGTEGEDEG. Residues 258 to 467 form the Peptidase M12B domain; that stretch reads RYVETMLVAD…GHGECLMDKP (210 aa). Ca(2+) is bound by residues glutamate 261, aspartate 344, and aspartate 351. Disulfide bonds link cysteine 333/cysteine 385, cysteine 362/cysteine 367, cysteine 379/cysteine 462, and cysteine 417/cysteine 446. Residue histidine 401 coordinates Zn(2+). Residue glutamate 402 is part of the active site. 2 residues coordinate Zn(2+): histidine 405 and histidine 411. 2 residues coordinate Ca(2+): cysteine 462 and aspartate 465. The Disintegrin domain occupies 476 to 559; it reads DLPGTSYDAN…DRKHFDTPFH (84 aa). Cystine bridges form between cysteine 488–cysteine 511, cysteine 499–cysteine 521, cysteine 506–cysteine 540, and cysteine 534–cysteine 545. Asparagine 547 is a glycosylation site (N-linked (GlcNAc...) asparagine). In terms of domain architecture, TSP type-1 1 spans 559 to 614; it reads HGSWGMWGPWGDCSRTCGGGVQYTMRECDNPVPKNGGKYCEGKRVRYRSCNLEDCP. Intrachain disulfides connect cysteine 571–cysteine 608, cysteine 575–cysteine 613, and cysteine 586–cysteine 598. Asparagine 720 and asparagine 764 each carry an N-linked (GlcNAc...) asparagine glycan. Residues 725–849 form a spacer region; it reads KKISGSVTSA…YFVKKKKESF (125 aa). TSP type-1 domains lie at 854-905 and 908-967; these read TFSA…RPCA and PCPQ…AECS.

It depends on Zn(2+) as a cofactor. In terms of processing, the precursor is cleaved by a furin endopeptidase. Glycosylated. Can be O-fucosylated by POFUT2 on a serine or a threonine residue found within the consensus sequence C1-X(2)-(S/T)-C2-G of the TSP type-1 repeat domains where C1 and C2 are the first and second cysteine residue of the repeat, respectively. Fucosylated repeats can then be further glycosylated by the addition of a beta-1,3-glucose residue by the glucosyltransferase, B3GALTL. Fucosylation mediates the efficient secretion of ADAMTS family members. Can also be C-glycosylated with one or two mannose molecules on tryptophan residues within the consensus sequence W-X-X-W of the TPRs, and N-glycosylated. These other glycosylations can also facilitate secretion.

The protein localises to the secreted. It is found in the extracellular space. The protein resides in the extracellular matrix. In terms of biological role, metalloprotease which cleaves aggrecan, a cartilage proteoglycan, at the '1938-Glu-|-Leu-1939' site (within the chondroitin sulfate attachment domain), and may be involved in its turnover. Also cleaves COMP. Has angiogenic inhibitor activity. May play a critical role in follicular rupture. The sequence is that of A disintegrin and metalloproteinase with thrombospondin motifs 1 (ADAMTS1) from Homo sapiens (Human).